The chain runs to 494 residues: MFRVQKELVSHEAVIVALFEEDKKSSFVQELDKAFEGQLQVLLEEKELSTKKKAISKVHSLGKTNVKRYYFVGLGKKESYTTETLRAALGKAFKALQAAKVQDAAILLDSFVTDKLDAIDVAHIAAEVQGLGTYELQTYKADKKDRVELEKFTAITAEDAQEIEAALTVGYVHGRATNSARTLVNMPPNVLTATKLAEYAVELAEKYDMDYKVLEKEEMEELGMGALLAVNQGSTEPPKMIALIYKGKEEWKDVIGFVGKGITYDTGGYSLKPREGMVGMKGDMGGAAAVLGAMEIIGELRPEQNVIAVIPSTDNVVSGTAFKPDDVITSMSGKTIEVLNTDAEGRLALADGITYAKKLGANYLVDVATLTGGVIVALGNHTTGAMTNNEELFEQVLEASMETDEPIWQLPIFERDKERVKNSKFADLNNSPGREGHAVMAGTFIGEFAEETPWVHLDIAGTSETSGAHDLGPSGATGAMVRTLATLVERFGEE.

K260 and D265 together coordinate Mn(2+). Residue K272 is part of the active site. 3 residues coordinate Mn(2+): D283, D342, and E344. The active site involves R346.

The protein belongs to the peptidase M17 family. Requires Mn(2+) as cofactor.

It is found in the cytoplasm. The catalysed reaction is Release of an N-terminal amino acid, Xaa-|-Yaa-, in which Xaa is preferably Leu, but may be other amino acids including Pro although not Arg or Lys, and Yaa may be Pro. Amino acid amides and methyl esters are also readily hydrolyzed, but rates on arylamides are exceedingly low.. It catalyses the reaction Release of an N-terminal amino acid, preferentially leucine, but not glutamic or aspartic acids.. In terms of biological role, presumably involved in the processing and regular turnover of intracellular proteins. Catalyzes the removal of unsubstituted N-terminal amino acids from various peptides. This is Probable cytosol aminopeptidase from Bacillus mycoides (strain KBAB4) (Bacillus weihenstephanensis).